The chain runs to 359 residues: Fructose-bisphosphate aldolase (359 aa).

Ser-62 is a binding site for D-glyceraldehyde 3-phosphate. The Proton donor role is filled by Asp-109. Positions 110, 144, 174, and 226 each coordinate Zn(2+). Gly-227 contributes to the dihydroxyacetone phosphate binding site. Position 265 (His-265) interacts with Zn(2+). Residues 266-268 (GGS) and 287-290 (NLDT) contribute to the dihydroxyacetone phosphate site.

It belongs to the class II fructose-bisphosphate aldolase family. Homodimer. Zn(2+) serves as cofactor.

The protein resides in the cytoplasm. The catalysed reaction is beta-D-fructose 1,6-bisphosphate = D-glyceraldehyde 3-phosphate + dihydroxyacetone phosphate. It functions in the pathway carbohydrate degradation; glycolysis; D-glyceraldehyde 3-phosphate and glycerone phosphate from D-glucose: step 4/4. Functionally, catalyzes the aldol condensation of dihydroxyacetone phosphate (DHAP or glycerone-phosphate) with glyceraldehyde 3-phosphate (G3P) to form fructose 1,6-bisphosphate (FBP) in gluconeogenesis and the reverse reaction in glycolysis. The chain is Fructose-bisphosphate aldolase (FBA1) from Candida albicans (strain SC5314 / ATCC MYA-2876) (Yeast).